Reading from the N-terminus, the 250-residue chain is ATP synthase subunit a (250 aa).

The next 6 helical transmembrane spans lie at Ala29–Ser49, Phe84–Met104, Ile114–Tyr134, Leu143–Ile163, Val189–Leu209, and Val216–Leu236.

Belongs to the ATPase A chain family. F-type ATPases have 2 components, CF(1) - the catalytic core - and CF(0) - the membrane proton channel. CF(1) has five subunits: alpha(3), beta(3), gamma(1), delta(1), epsilon(1). CF(0) has three main subunits: a(1), b(2) and c(9-12). The alpha and beta chains form an alternating ring which encloses part of the gamma chain. CF(1) is attached to CF(0) by a central stalk formed by the gamma and epsilon chains, while a peripheral stalk is formed by the delta and b chains.

It is found in the cell inner membrane. Functionally, key component of the proton channel; it plays a direct role in the translocation of protons across the membrane. This is ATP synthase subunit a from Allorhizobium ampelinum (strain ATCC BAA-846 / DSM 112012 / S4) (Agrobacterium vitis (strain S4)).